The following is a 602-amino-acid chain: Proteasome-associated ATPase (602 aa).

Over residues 1–17 (MSGPRSGSGSDGSTGRP) the composition is skewed to low complexity. The interval 1 to 31 (MSGPRSGSGSDGSTGRPGDAESRRSAYEKET) is disordered. Residues 18–31 (GDAESRRSAYEKET) are compositionally biased toward basic and acidic residues. The stretch at 19–106 (DAESRRSAYE…LKEEVDRLAQ (88 aa)) forms a coiled coil. Position 289–294 (289–294 (GCGKTL)) interacts with ATP. The segment at 601-602 (YL) is docks into pockets in the proteasome alpha-ring.

The protein belongs to the AAA ATPase family. Homohexamer. Assembles into a hexameric ring structure that caps the 20S proteasome core. Strongly interacts with the prokaryotic ubiquitin-like protein Pup through a hydrophobic interface; the interacting region of ARC lies in its N-terminal coiled-coil domain. There is one Pup binding site per ARC hexamer ring. Upon ATP-binding, the C-terminus of ARC interacts with the alpha-rings of the proteasome core, possibly by binding to the intersubunit pockets.

Its pathway is protein degradation; proteasomal Pup-dependent pathway. In terms of biological role, ATPase which is responsible for recognizing, binding, unfolding and translocation of pupylated proteins into the bacterial 20S proteasome core particle. May be essential for opening the gate of the 20S proteasome via an interaction with its C-terminus, thereby allowing substrate entry and access to the site of proteolysis. Thus, the C-termini of the proteasomal ATPase may function like a 'key in a lock' to induce gate opening and therefore regulate proteolysis. This chain is Proteasome-associated ATPase, found in Frankia casuarinae (strain DSM 45818 / CECT 9043 / HFP020203 / CcI3).